A 99-amino-acid chain; its full sequence is DNA-binding protein Fis (99 aa).

Residues 75–94 constitute a DNA-binding region (H-T-H motif); the sequence is QTRAAIMMGINRGTLRKKLK.

The protein belongs to the transcriptional regulatory Fis family. In terms of assembly, homodimer.

Its function is as follows. Activates ribosomal RNA transcription. Plays a direct role in upstream activation of rRNA promoters. The chain is DNA-binding protein Fis from Tolumonas auensis (strain DSM 9187 / NBRC 110442 / TA 4).